A 135-amino-acid polypeptide reads, in one-letter code: uncharacterized protein (135 aa).

The segment at 1–75 (MAAATETGQA…PPPRPPQRRC (75 aa)) is disordered.

This is an uncharacterized protein from Homo sapiens (Human).